Reading from the N-terminus, the 612-residue chain is Cytoplasmic dynein 1 intermediate chain 2 (612 aa).

Basic and acidic residues-rich tracts occupy residues 1–13 (MSDK…ELER) and 20–43 (QIRE…KKEA). Positions 1–188 (MSDKSDLKAE…PHELTEEEKQ (188 aa)) are disordered. Serine 2 bears the N-acetylserine mark. Serine 51 is modified (diphosphoserine). Phosphoserine is present on residues serine 51 and serine 84. The span at 82-91 (PSSKSVSTPS) shows a compositional bias: low complexity. The residue at position 89 (threonine 89) is a Phosphothreonine. Serine 91, serine 95, and serine 98 each carry phosphoserine. A compositionally biased stretch (basic and acidic residues) spans 164 to 188 (EKTLKKDEENDSKAPPHELTEEEKQ). 7 WD repeats span residues 251–300 (SKHR…TTPE), 304–344 (HCQS…RTPV), 353–394 (AHTH…HPQD), 403–443 (SKAV…AGIS), 448–493 (GHQG…PLYS), 496–536 (DNSD…EVPT), and 542–581 (EGNP…AVPR).

Belongs to the dynein intermediate chain family. Homodimer. The cytoplasmic dynein 1 complex consists of two catalytic heavy chains (HCs) and a number of non-catalytic subunits presented by intermediate chains (ICs), light intermediate chains (LICs) and light chains (LCs); the composition seems to vary in respect to the IC, LIC and LC composition. The heavy chain homodimer serves as a scaffold for the probable homodimeric assembly of the respective non-catalytic subunits. The ICs and LICs bind directly to the HC dimer and the LCs assemble on the IC dimer. Interacts with DYNLT3. Interacts with DYNLT1. Interacts (dephosphorylated at Ser-84) with DCTN1. Interacts with BICD2. Interacts with SPEF2. Interacts with CFAP61. Post-translationally, the phosphorylation status of Ser-84 appears to be involved in dynactin-dependent target binding. In terms of processing, pyrophosphorylation by 5-diphosphoinositol pentakisphosphate (5-IP7) promotes interaction with DCTN1. Serine pyrophosphorylation is achieved by Mg(2+)-dependent, but enzyme independent transfer of a beta-phosphate from a inositol pyrophosphate to a pre-phosphorylated serine residue.

The protein localises to the cytoplasm. Its subcellular location is the cytoskeleton. In terms of biological role, acts as one of several non-catalytic accessory components of the cytoplasmic dynein 1 complex that are thought to be involved in linking dynein to cargos and to adapter proteins that regulate dynein function. Cytoplasmic dynein 1 acts as a motor for the intracellular retrograde motility of vesicles and organelles along microtubules. The intermediate chains mediate the binding of dynein to dynactin via its 150 kDa component (p150-glued) DCTN1. Involved in membrane-transport, such as Golgi apparatus, late endosomes and lysosomes. The protein is Cytoplasmic dynein 1 intermediate chain 2 (Dync1i2) of Mus musculus (Mouse).